The chain runs to 415 residues: Beta-1,4-glucuronyltransferase 1 (415 aa).

Topologically, residues 1–8 (MQMSYAIR) are cytoplasmic. A helical; Signal-anchor for type II membrane protein transmembrane segment spans residues 9–36 (CAFYQLLLAALMLVAMLQLLYLSLLSGL). The Lumenal portion of the chain corresponds to 37 to 415 (HGQEEQEQYF…ARYPNSPHRC (379 aa)). N-linked (GlcNAc...) asparagine glycosylation occurs at Asn204. Mn(2+) is bound by residues Asp227 and Asp229. N-linked (GlcNAc...) asparagine glycosylation occurs at Asn300.

This sequence belongs to the glycosyltransferase 49 family. In terms of assembly, interacts with LARGE1 and LARGE2. The cofactor is Mn(2+).

The protein localises to the golgi apparatus membrane. It catalyses the reaction 3-O-[beta-D-Xyl-(1-&gt;4)-Rib-ol-P-Rib-ol-P-3-beta-D-GalNAc-(1-&gt;3)-beta-D-GlcNAc-(1-&gt;4)-(O-6-P-alpha-D-Man)]-Thr-[protein] + UDP-alpha-D-glucuronate = 3-O-[beta-D-GlcA-(1-&gt;3)-beta-D-Xyl-(1-&gt;4)-Rib-ol-P-Rib-ol-P-3-beta-D-GalNAc-(1-&gt;3)-beta-D-GlcNAc-(1-&gt;4)-(O-6-P-alpha-D-Man)]-Thr-[protein] + UDP + H(+). The protein operates within protein modification; protein glycosylation. Its function is as follows. Beta-1,4-glucuronyltransferase involved in O-mannosylation of alpha-dystroglycan (DAG1). Transfers a glucuronic acid (GlcA) residue onto a xylose (Xyl) acceptor to produce the glucuronyl-beta-1,4-xylose-beta disaccharide primer, which is further elongated by LARGE1, during synthesis of phosphorylated O-mannosyl glycan. Phosphorylated O-mannosyl glycan is a carbohydrate structure present in alpha-dystroglycan (DAG1), which is required for binding laminin G-like domain-containing extracellular proteins with high affinity. Required for axon guidance; via its function in O-mannosylation of alpha-dystroglycan (DAG1). The polypeptide is Beta-1,4-glucuronyltransferase 1 (Mus musculus (Mouse)).